The sequence spans 1021 residues: Disease resistance protein Pikm2-TS (1021 aa).

The segment at 1-182 (MELVVGASEA…PQIIGIKEPV (182 aa)) is structured coiled coil (CC) domain. One can recognise an NB-ARC domain in the interval 186 to 519 (TVMEELEVWL…WIAEGFANEK (334 aa)). A disordered region spans residues 297-317 (PENDGNPDNTPIRLQETTDDD). LRR repeat units follow at residues 612–634 (LAQV…SFNY), 659–682 (MLLL…IQKL), and 683–705 (EYLE…IVQL). The interval 719–751 (RKGLRLPQEKSKKPIKNPSPQGKTKEPAKKGFL) is disordered. LRR repeat units follow at residues 785–807 (LTGL…TFKQ), 817–841 (SCGL…DMPA), 843–865 (PRYL…ITSI), 866–888 (TTLN…ILHI), 912–935 (KDIL…GFKS), and 957–981 (MPAL…ILEN).

This sequence belongs to the disease resistance NB-LRR family. In terms of tissue distribution, constitutively expressed.

In terms of biological role, disease resistance (R) protein. Resistance proteins guard the plant against pathogens that contain an appropriate avirulence protein via an indirect interaction with this avirulence protein. That triggers a defense system including the hypersensitive response, which restricts the pathogen growth. Contribution of Pikm-1 is required to recognize the effector avirulence protein AVR-Pik. This Oryza sativa subsp. japonica (Rice) protein is Disease resistance protein Pikm2-TS.